Reading from the N-terminus, the 366-residue chain is Chorismate synthase (366 aa).

Arginine 48 serves as a coordination point for NADP(+). Residues 125–127 (RSS), 241–242 (NA), glycine 285, 300–304 (KPTSS), and arginine 326 contribute to the FMN site.

This sequence belongs to the chorismate synthase family. Homotetramer. Requires FMNH2 as cofactor.

The enzyme catalyses 5-O-(1-carboxyvinyl)-3-phosphoshikimate = chorismate + phosphate. Its pathway is metabolic intermediate biosynthesis; chorismate biosynthesis; chorismate from D-erythrose 4-phosphate and phosphoenolpyruvate: step 7/7. Its function is as follows. Catalyzes the anti-1,4-elimination of the C-3 phosphate and the C-6 proR hydrogen from 5-enolpyruvylshikimate-3-phosphate (EPSP) to yield chorismate, which is the branch point compound that serves as the starting substrate for the three terminal pathways of aromatic amino acid biosynthesis. This reaction introduces a second double bond into the aromatic ring system. The protein is Chorismate synthase of Roseobacter denitrificans (strain ATCC 33942 / OCh 114) (Erythrobacter sp. (strain OCh 114)).